Consider the following 255-residue polypeptide: tRNA (guanine-N(7)-)-methyltransferase (255 aa).

A disordered region spans residues 1-29 (MMHDDPNEAGLPPDDAALPDEAADGADEV). Positions 17 to 27 (ALPDEAADGAD) are enriched in acidic residues. Residues Glu86, Glu111, Asp138, and Asp161 each coordinate S-adenosyl-L-methionine. Asp161 is an active-site residue. Residues Lys165, Asp197, and 232-235 (TKFE) each bind substrate.

It belongs to the class I-like SAM-binding methyltransferase superfamily. TrmB family.

It catalyses the reaction guanosine(46) in tRNA + S-adenosyl-L-methionine = N(7)-methylguanosine(46) in tRNA + S-adenosyl-L-homocysteine. Its pathway is tRNA modification; N(7)-methylguanine-tRNA biosynthesis. Its function is as follows. Catalyzes the formation of N(7)-methylguanine at position 46 (m7G46) in tRNA. The polypeptide is tRNA (guanine-N(7)-)-methyltransferase (Burkholderia ambifaria (strain ATCC BAA-244 / DSM 16087 / CCUG 44356 / LMG 19182 / AMMD) (Burkholderia cepacia (strain AMMD))).